Reading from the N-terminus, the 740-residue chain is Arf-GAP with coiled-coil, ANK repeat and PH domain-containing protein 1 (740 aa).

The BAR domain occupies 1–226 (MTVKLDFEEC…RKELGTQLHN (226 aa)). The segment at 1–382 (MTVKLDFEEC…RGPGQVSGYH (382 aa)) is required for formation of endosomal tubules when overexpressed with PIP5K1C. In terms of domain architecture, PH spans 265–360 (GLVMEGHLFK…WVSAVQSSIA (96 aa)). The region spanning 405 to 527 (GQVAAQVQSV…KFLTKLPEIR (123 aa)) is the Arf-GAP domain. The required for interaction with GULP1 stretch occupies residues 405 to 740 (GQVAAQVQSV…SRRSHDLHTL (336 aa)). Residues 420-443 (CCDCREPAPEWASINLGVTLCIQC) form a C4-type zinc finger. Y485 carries the 3'-nitrotyrosine modification. The disordered stretch occupies residues 525–562 (EIRGRRGGRGPPRGHPPVPPKPPIRPHSGIVRSKSECP). Positions 525-566 (EIRGRRGGRGPPRGHPPVPPKPPIRPHSGIVRSKSECPSDDM) are prevents interaction with ITGB1 when S-554 is not phosphorylated. Residues 537–549 (RGHPPVPPKPPIR) are compositionally biased toward pro residues. ANK repeat units lie at residues 606 to 635 (GNAT…NVNQ), 639 to 668 (AGRG…DLGA), and 672 to 702 (EGRD…EAEA).

Banana-shaped homodimer laterally assembling into tetramers, the tetramers further pack helically onto the membrane. Interacts with GTP-bound ARF6. Interacts with third cytoplasmic loop of SLC2A4/GLUT4. Interacts with CLTC. Interacts with GULP1. Forms a complex with GDP-bound ARF6 and GULP1. Interacts with ITGB1; required for ITGB1 recycling.

The protein localises to the recycling endosome membrane. Its activity is regulated as follows. GAP activity stimulated by phosphatidylinositol 4,5-bisphosphate (PIP2) and phosphatidic acid. Functionally, GTPase-activating protein (GAP) for ADP ribosylation factor 6 (ARF6) required for clathrin-dependent export of proteins from recycling endosomes to trans-Golgi network and cell surface. Required for regulated export of ITGB1 from recycling endosomes to the cell surface and ITGB1-dependent cell migration. In Mus musculus (Mouse), this protein is Arf-GAP with coiled-coil, ANK repeat and PH domain-containing protein 1 (Acap1).